We begin with the raw amino-acid sequence, 1004 residues long: UPF0182 protein Mflv_4654 (1004 aa).

The next 7 helical transmembrane spans lie at Phe-18–Asp-38, Leu-63–Leu-83, Leu-114–Tyr-134, Phe-176–Ile-196, Ile-211–Asp-231, Lys-260–Leu-280, and Ile-288–Val-308. Residues Pro-896–Gly-940 are compositionally biased toward low complexity. Positions Pro-896–Lys-960 are disordered.

The protein belongs to the UPF0182 family.

The protein localises to the cell membrane. The sequence is that of UPF0182 protein Mflv_4654 from Mycolicibacterium gilvum (strain PYR-GCK) (Mycobacterium gilvum (strain PYR-GCK)).